We begin with the raw amino-acid sequence, 157 residues long: Small ribosomal subunit protein uS7 (157 aa).

Belongs to the universal ribosomal protein uS7 family. In terms of assembly, part of the 30S ribosomal subunit. Contacts proteins S9 and S11.

One of the primary rRNA binding proteins, it binds directly to 16S rRNA where it nucleates assembly of the head domain of the 30S subunit. Is located at the subunit interface close to the decoding center, probably blocks exit of the E-site tRNA. In Francisella philomiragia subsp. philomiragia (strain ATCC 25017 / CCUG 19701 / FSC 153 / O#319-036), this protein is Small ribosomal subunit protein uS7.